Consider the following 396-residue polypeptide: Elongation factor Tu (396 aa).

Positions 10 to 206 (KPHCNIGTIG…AVDAYIPQPE (197 aa)) constitute a tr-type G domain. Residues 19 to 26 (GHVDHGKT) form a G1 region. 19–26 (GHVDHGKT) contributes to the GTP binding site. Thr-26 contributes to the Mg(2+) binding site. The segment at 60-64 (GITIS) is G2. A G3 region spans residues 81–84 (DCPG). GTP-binding positions include 81–85 (DCPGH) and 136–139 (NKVD). Positions 136 to 139 (NKVD) are G4. Positions 174 to 176 (SAL) are G5.

It belongs to the TRAFAC class translation factor GTPase superfamily. Classic translation factor GTPase family. EF-Tu/EF-1A subfamily. In terms of assembly, monomer.

Its subcellular location is the cytoplasm. It carries out the reaction GTP + H2O = GDP + phosphate + H(+). GTP hydrolase that promotes the GTP-dependent binding of aminoacyl-tRNA to the A-site of ribosomes during protein biosynthesis. This is Elongation factor Tu from Parvibaculum lavamentivorans (strain DS-1 / DSM 13023 / NCIMB 13966).